A 257-amino-acid polypeptide reads, in one-letter code: Photosystem I chlorophyll a/b-binding protein 2, chloroplastic (257 aa).

The transit peptide at 1-43 (MASSLCASSAIAAISSPSFLGGKKLRLKKKLTVPAVSRPDASV) directs the protein to the chloroplast. Trp55 provides a ligand contact to chlorophyll b. Phe75, Ser81, and Glu94 together coordinate chlorophyll a. Arg99 lines the chlorophyll b pocket. 2 helical membrane-spanning segments follow: residues 100–120 (WAML…IGIL) and 133–153 (YFTD…WAEG). The chlorophyll b site is built by Glu152 and Arg155. Lys208, Glu209, Asn212, Arg214, Gln226, and His241 together coordinate chlorophyll a. A helical membrane pass occupies residues 215-235 (LAMLAVMGAWFQHIYTGTGPI).

It belongs to the light-harvesting chlorophyll a/b-binding (LHC) protein family. In terms of assembly, the LHC complex consists of chlorophyll a-b binding proteins. Red-emitting heterodimers with LHCA3 and LHCA5. Binds to carotenoids. Requires Binds at least 14 chlorophylls (8 Chl-a and 6 Chl-b) and carotenoids such as lutein and neoxanthin. as cofactor. Photoregulated by reversible phosphorylation of its threonine residues.

It is found in the plastid. The protein resides in the chloroplast thylakoid membrane. In terms of biological role, the light-harvesting complex (LHC) functions as a light receptor, it captures and delivers excitation energy to photosystems with which it is closely associated, here photosystem I. The polypeptide is Photosystem I chlorophyll a/b-binding protein 2, chloroplastic (Arabidopsis thaliana (Mouse-ear cress)).